A 333-amino-acid chain; its full sequence is Tetraacyldisaccharide 4'-kinase (333 aa).

Residue 60-67 coordinates ATP; it reads TVGGTGKT.

Belongs to the LpxK family.

The enzyme catalyses a lipid A disaccharide + ATP = a lipid IVA + ADP + H(+). It participates in glycolipid biosynthesis; lipid IV(A) biosynthesis; lipid IV(A) from (3R)-3-hydroxytetradecanoyl-[acyl-carrier-protein] and UDP-N-acetyl-alpha-D-glucosamine: step 6/6. Transfers the gamma-phosphate of ATP to the 4'-position of a tetraacyldisaccharide 1-phosphate intermediate (termed DS-1-P) to form tetraacyldisaccharide 1,4'-bis-phosphate (lipid IVA). The polypeptide is Tetraacyldisaccharide 4'-kinase (Pseudomonas putida (strain ATCC 700007 / DSM 6899 / JCM 31910 / BCRC 17059 / LMG 24140 / F1)).